A 57-amino-acid chain; its full sequence is Thiocillin GE37468 (57 aa).

The propeptide at 1-42 (MGNNEEYFIDVNDLSIDVFDVVEQGGAVTALTADHGMPEVGA) is removed in mature form. The 5-methyloxazole-4-carboxylic acid (Ser-Thr) cross-link spans 43–44 (ST). Residues 43–52 (STNCFCYICC) constitute a cross-link (pyridine-2,5-dicarboxylic acid (Ser-Cys) (with S-53)). Residues 43-53 (STNCFCYICCS) constitute a cross-link (pyridine-2,5-dicarboxylic acid (Ser-Ser) (with C-52)). The segment at residues 45-46 (NC) is a cross-link (thiazole-4-carboxylic acid (Asn-Cys)). Residues 47 to 48 (FC) constitute a cross-link (thiazoline-4-carboxylic acid (Phe-Cys)). Isoleucine 50 carries the post-translational modification 5-hydroxy-3-methylproline (Ile). Residues 50–51 (IC) constitute a cross-link (thiazole-4-carboxylic acid (Ile-Cys)). The segment at residues 51 to 52 (CC) is a cross-link (thiazole-4-carboxylic acid (Cys-Cys)). Positions 53 to 54 (SC) form a cross-link, thiazole-4-carboxylic acid (Ser-Cys). Residues serine 55 and serine 56 each carry the 2,3-didehydroalanine (Ser) modification. Position 57 (asparagine 57) is a propeptide, removed in mature form.

Maturation of thiazole and oxazole containing antibiotics involves the enzymatic condensation of a Cys, Ser or Thr with the alpha-carbonyl of the preceding amino acid to form a thioether or ether bond, then dehydration to form a double bond with the alpha-amino nitrogen. Thiazoline or oxazoline ring are dehydrogenated to form thiazole or oxazole rings. Post-translationally, maturation of pyridinyl containing antibiotics involves the cross-linking of a Ser and a Cys-Ser pair usually separated by 7 or 8 residues along the peptide chain. The Ser residues are dehydrated to didehydroalanines, then bonded between their beta carbons. The alpha carbonyl of the Cys condenses with alpha carbon of the first Ser to form a pyridinyl ring. The ring may be multiply dehydrogenated to form a pyridine ring with loss of the amino nitrogen of the first Ser.

The protein resides in the secreted. In terms of biological role, has bacteriocidal activity against both aerobic and anaerobic Gram-positive bacteria. Inhibits growth of B.subtilis (MIC=0.047 ug/ml) and methicillin-resistant S.aureus (MRSA) (MIC=0.047 ug/ml). Has poor activity against Gram-negative bacteria, with the exception of B.fragilis. Inhibits bacterial protein biosynthesis by acting on elongation factor Tu (EF-Tu). Full antibiotic activity depends on the presence of the modified residue Ile-50. The chain is Thiocillin GE37468 (getA) from Streptomyces sp.